Reading from the N-terminus, the 857-residue chain is Aminopeptidase N (857 aa).

Substrate contacts are provided by residues E130 and 264 to 268 (GAMEN). A Zn(2+)-binding site is contributed by H298. Catalysis depends on E299, which acts as the Proton acceptor. H302 and E321 together coordinate Zn(2+).

Belongs to the peptidase M1 family. In terms of assembly, monomer. The cofactor is Zn(2+). The N-terminus is blocked.

Its subcellular location is the cytoplasm. It catalyses the reaction Release of an N-terminal amino acid, Xaa-|-Yaa- from a peptide, amide or arylamide. Xaa is preferably Ala, but may be most amino acids including Pro (slow action). When a terminal hydrophobic residue is followed by a prolyl residue, the two may be released as an intact Xaa-Pro dipeptide.. Its function is as follows. Aminopeptidase with broad substrate specificity to several peptides. Shows strong preference for leucine but also cleaves next to Arg and Lys in peptide-bond-containing substrates. The chain is Aminopeptidase N (pepN) from Streptomyces lividans.